Reading from the N-terminus, the 427-residue chain is Enolase (427 aa).

Residue glutamine 163 coordinates (2R)-2-phosphoglycerate. The active-site Proton donor is glutamate 205. Residues aspartate 242, glutamate 285, and aspartate 312 each contribute to the Mg(2+) site. (2R)-2-phosphoglycerate is bound by residues lysine 337, arginine 366, serine 367, and lysine 388. Lysine 337 functions as the Proton acceptor in the catalytic mechanism.

It belongs to the enolase family. The cofactor is Mg(2+).

It localises to the cytoplasm. It is found in the secreted. The protein resides in the cell surface. It catalyses the reaction (2R)-2-phosphoglycerate = phosphoenolpyruvate + H2O. Its pathway is carbohydrate degradation; glycolysis; pyruvate from D-glyceraldehyde 3-phosphate: step 4/5. Catalyzes the reversible conversion of 2-phosphoglycerate (2-PG) into phosphoenolpyruvate (PEP). It is essential for the degradation of carbohydrates via glycolysis. This chain is Enolase, found in Burkholderia mallei (strain NCTC 10247).